A 192-amino-acid chain; its full sequence is dTDP-4-amino-4,6-dideoxy-D-glucose acyltransferase (192 aa).

It belongs to the transferase hexapeptide repeat family.

It carries out the reaction dTDP-4-amino-4,6-dideoxy-alpha-D-glucose + acetyl-CoA = dTDP-4-acetamido-4,6-dideoxy-alpha-D-glucose + CoA + H(+). It participates in bacterial outer membrane biogenesis; lipopolysaccharide biosynthesis. Catalyzes the conversion of dTDP-4-amino-4,6-dideoxy-D-glucose (dTDP-D-Qui4N) to dTDP-4-acetamido-4,6-dideoxy-D-glucose (dTDP-D-Qui4NAc). This chain is dTDP-4-amino-4,6-dideoxy-D-glucose acyltransferase (vioB), found in Escherichia coli.